Consider the following 257-residue polypeptide: Diphthine synthase (257 aa).

Residues Ile-11, Asp-89, Ile-92, 117 to 118 (SV), Leu-169, Leu-210, and His-235 each bind S-adenosyl-L-methionine.

The protein belongs to the diphthine synthase family. In terms of assembly, homodimer.

The catalysed reaction is 2-[(3S)-amino-3-carboxypropyl]-L-histidyl-[translation elongation factor 2] + 3 S-adenosyl-L-methionine = diphthine-[translation elongation factor 2] + 3 S-adenosyl-L-homocysteine + 3 H(+). It functions in the pathway protein modification; peptidyl-diphthamide biosynthesis. Functionally, S-adenosyl-L-methionine-dependent methyltransferase that catalyzes the trimethylation of the amino group of the modified target histidine residue in translation elongation factor 2 (EF-2), to form an intermediate called diphthine. The three successive methylation reactions represent the second step of diphthamide biosynthesis. This Saccharolobus solfataricus (strain ATCC 35092 / DSM 1617 / JCM 11322 / P2) (Sulfolobus solfataricus) protein is Diphthine synthase.